A 390-amino-acid polypeptide reads, in one-letter code: Chorismate synthase (390 aa).

2 residues coordinate NADP(+): Arg-39 and Arg-45. FMN is bound by residues 132-134, 253-254, Gly-298, 313-317, and Arg-339; these read RSS, NA, and KPIPT.

The protein belongs to the chorismate synthase family. In terms of assembly, homotetramer. The cofactor is FMNH2.

It catalyses the reaction 5-O-(1-carboxyvinyl)-3-phosphoshikimate = chorismate + phosphate. Its pathway is metabolic intermediate biosynthesis; chorismate biosynthesis; chorismate from D-erythrose 4-phosphate and phosphoenolpyruvate: step 7/7. Catalyzes the anti-1,4-elimination of the C-3 phosphate and the C-6 proR hydrogen from 5-enolpyruvylshikimate-3-phosphate (EPSP) to yield chorismate, which is the branch point compound that serves as the starting substrate for the three terminal pathways of aromatic amino acid biosynthesis. This reaction introduces a second double bond into the aromatic ring system. The sequence is that of Chorismate synthase from Bacillus velezensis (strain DSM 23117 / BGSC 10A6 / LMG 26770 / FZB42) (Bacillus amyloliquefaciens subsp. plantarum).